The primary structure comprises 228 residues: 5'-methylthioadenosine/S-adenosylhomocysteine nucleosidase (228 aa).

Glu-11 (proton acceptor) is an active-site residue. Substrate is bound by residues Gly-77, Ile-151, and 172 to 173 (ME). The active-site Proton donor is Asp-196.

Belongs to the PNP/UDP phosphorylase family. MtnN subfamily.

The enzyme catalyses S-adenosyl-L-homocysteine + H2O = S-(5-deoxy-D-ribos-5-yl)-L-homocysteine + adenine. It carries out the reaction S-methyl-5'-thioadenosine + H2O = 5-(methylsulfanyl)-D-ribose + adenine. It catalyses the reaction 5'-deoxyadenosine + H2O = 5-deoxy-D-ribose + adenine. The protein operates within amino-acid biosynthesis; L-methionine biosynthesis via salvage pathway; S-methyl-5-thio-alpha-D-ribose 1-phosphate from S-methyl-5'-thioadenosine (hydrolase route): step 1/2. Catalyzes the irreversible cleavage of the glycosidic bond in both 5'-methylthioadenosine (MTA) and S-adenosylhomocysteine (SAH/AdoHcy) to adenine and the corresponding thioribose, 5'-methylthioribose and S-ribosylhomocysteine, respectively. Also cleaves 5'-deoxyadenosine, a toxic by-product of radical S-adenosylmethionine (SAM) enzymes, into 5-deoxyribose and adenine. The protein is 5'-methylthioadenosine/S-adenosylhomocysteine nucleosidase of Staphylococcus saprophyticus subsp. saprophyticus (strain ATCC 15305 / DSM 20229 / NCIMB 8711 / NCTC 7292 / S-41).